Consider the following 249-residue polypeptide: 6-phosphogluconolactonase 3 (249 aa).

It belongs to the glucosamine/galactosamine-6-phosphate isomerase family. 6-phosphogluconolactonase subfamily.

The protein localises to the cytoplasm. It is found in the nucleus. It carries out the reaction 6-phospho-D-glucono-1,5-lactone + H2O = 6-phospho-D-gluconate + H(+). The protein operates within carbohydrate degradation; pentose phosphate pathway; D-ribulose 5-phosphate from D-glucose 6-phosphate (oxidative stage): step 2/3. Its function is as follows. Hydrolysis of 6-phosphogluconolactone to 6-phosphogluconate. The polypeptide is 6-phosphogluconolactonase 3 (SOL3) (Saccharomyces cerevisiae (strain RM11-1a) (Baker's yeast)).